The chain runs to 513 residues: Putative ATP-dependent RNA helicase QP509L (513 aa).

Residues 110–262 enclose the Helicase ATP-binding domain; sequence KKLLSPYGRF…KIIIHHLGQP (153 aa). 123–130 provides a ligand contact to ATP; sequence LNTGLGKT. A DEAH box motif is present at residues 215–218; the sequence is DEAH.

The protein belongs to the DEAD box helicase family. DEAH subfamily.

It carries out the reaction ATP + H2O = ADP + phosphate + H(+). In African swine fever virus (isolate Tick/South Africa/Pretoriuskop Pr4/1996) (ASFV), this protein is Putative ATP-dependent RNA helicase QP509L.